The sequence spans 156 residues: ATP synthase subunit b (156 aa).

A helical transmembrane segment spans residues 7 to 27 (LFAQIIVFFGLVWFTMKFVWP).

The protein belongs to the ATPase B chain family. F-type ATPases have 2 components, F(1) - the catalytic core - and F(0) - the membrane proton channel. F(1) has five subunits: alpha(3), beta(3), gamma(1), delta(1), epsilon(1). F(0) has three main subunits: a(1), b(2) and c(10-14). The alpha and beta chains form an alternating ring which encloses part of the gamma chain. F(1) is attached to F(0) by a central stalk formed by the gamma and epsilon chains, while a peripheral stalk is formed by the delta and b chains.

Its subcellular location is the cell inner membrane. Its function is as follows. F(1)F(0) ATP synthase produces ATP from ADP in the presence of a proton or sodium gradient. F-type ATPases consist of two structural domains, F(1) containing the extramembraneous catalytic core and F(0) containing the membrane proton channel, linked together by a central stalk and a peripheral stalk. During catalysis, ATP synthesis in the catalytic domain of F(1) is coupled via a rotary mechanism of the central stalk subunits to proton translocation. Component of the F(0) channel, it forms part of the peripheral stalk, linking F(1) to F(0). The polypeptide is ATP synthase subunit b (Neisseria meningitidis serogroup C (strain 053442)).